The primary structure comprises 326 residues: Vacuolar protein sorting-associated protein 26A (326 aa).

This sequence belongs to the VPS26 family. Component of the heterotrimeric retromer cargo-selective complex (CSC) which is believed to associate with variable sorting nexins to form functionally distinct retromer complex variants.

It is found in the cytoplasm. The protein resides in the endosome membrane. Its subcellular location is the early endosome. Functionally, acts as a component of the retromer cargo-selective complex (CSC). The CSC is believed to be the core functional component of retromer or respective retromer complex variants acting to prevent missorting of selected transmembrane cargo proteins into the lysosomal degradation pathway. Retromer mediates retrograde transport of cargo proteins from endosomes to the trans-Golgi network (TGN). The sequence is that of Vacuolar protein sorting-associated protein 26A (vps26a) from Xenopus tropicalis (Western clawed frog).